Reading from the N-terminus, the 404-residue chain is tRNA-specific 2-thiouridylase MnmA (404 aa).

ATP-binding positions include 42–49 and Leu-68; that span reads GLSGGVDS. The active-site Nucleophile is Cys-129. Cys-129 and Cys-239 are disulfide-bonded. Gly-154 contributes to the ATP binding site. The interaction with tRNA stretch occupies residues 189 to 191; sequence KDQ. The Cysteine persulfide intermediate role is filled by Cys-239. Residues 344 to 345 form an interaction with tRNA region; the sequence is RY.

It belongs to the MnmA/TRMU family.

The protein localises to the cytoplasm. The enzyme catalyses S-sulfanyl-L-cysteinyl-[protein] + uridine(34) in tRNA + AH2 + ATP = 2-thiouridine(34) in tRNA + L-cysteinyl-[protein] + A + AMP + diphosphate + H(+). Its function is as follows. Catalyzes the 2-thiolation of uridine at the wobble position (U34) of tRNA, leading to the formation of s(2)U34. This is tRNA-specific 2-thiouridylase MnmA from Prochlorococcus marinus (strain NATL1A).